The primary structure comprises 339 residues: DNA-directed RNA polymerase subunit alpha (339 aa).

Residues 1-233 are alpha N-terminal domain (alpha-NTD); sequence MVREEITGST…DLFLPFIHTE (233 aa). The alpha C-terminal domain (alpha-CTD) stretch occupies residues 266-339; the sequence is GIPLNCIFID…IDLPKNKFSL (74 aa).

Belongs to the RNA polymerase alpha chain family. In terms of assembly, in plastids the minimal PEP RNA polymerase catalytic core is composed of four subunits: alpha, beta, beta', and beta''. When a (nuclear-encoded) sigma factor is associated with the core the holoenzyme is formed, which can initiate transcription.

The protein localises to the plastid. Its subcellular location is the chloroplast. It catalyses the reaction RNA(n) + a ribonucleoside 5'-triphosphate = RNA(n+1) + diphosphate. In terms of biological role, DNA-dependent RNA polymerase catalyzes the transcription of DNA into RNA using the four ribonucleoside triphosphates as substrates. The protein is DNA-directed RNA polymerase subunit alpha of Saccharum hybrid (Sugarcane).